A 550-amino-acid chain; its full sequence is Methionine--tRNA ligase (550 aa).

A 'HIGH' region motif is present at residues 13-23 (PYANGPLHFGH). Zn(2+) contacts are provided by Cys145, Cys148, Cys158, and Cys161. The 'KMSKS' region motif lies at 331-335 (QFSKS). Residue Lys334 coordinates ATP.

This sequence belongs to the class-I aminoacyl-tRNA synthetase family. MetG type 1 subfamily. Monomer. Requires Zn(2+) as cofactor.

Its subcellular location is the cytoplasm. The enzyme catalyses tRNA(Met) + L-methionine + ATP = L-methionyl-tRNA(Met) + AMP + diphosphate. In terms of biological role, is required not only for elongation of protein synthesis but also for the initiation of all mRNA translation through initiator tRNA(fMet) aminoacylation. This is Methionine--tRNA ligase (metG) from Chlamydia trachomatis serovar D (strain ATCC VR-885 / DSM 19411 / UW-3/Cx).